Consider the following 177-residue polypeptide: Gamma-crystallin M1-2 (177 aa).

2 consecutive Beta/gamma crystallin 'Greek key' domains span residues 2-40 (GKII…RVEN) and 41-83 (GCWM…RLLS). Residues 84 to 90 (QNLGIGT) are connecting peptide. Beta/gamma crystallin 'Greek key' domains lie at 91–131 (NKLR…NVLD) and 132–174 (GYWI…RRVI).

Belongs to the beta/gamma-crystallin family. As to quaternary structure, monomer.

In terms of biological role, crystallins are the dominant structural components of the vertebrate eye lens. The sequence is that of Gamma-crystallin M1-2 from Aquarana catesbeiana (American bullfrog).